The primary structure comprises 267 residues: Cell division protein FtsQ (267 aa).

Topologically, residues 1 to 32 (MRKKTSSNKKKQTKKTNNISLRRKLRLIYKKA) are cytoplasmic. The helical transmembrane segment at 33–53 (ILGLKIALIIFVCLFVFTKYF) threads the bilayer. Topologically, residues 54–267 (AGIKTYLTTN…DKNKYYIEKY (214 aa)) are periplasmic. The region spanning 73–141 (FKLENVIIEG…NTVYIKLFER (69 aa)) is the POTRA domain.

This sequence belongs to the FtsQ/DivIB family. FtsQ subfamily.

Its subcellular location is the cell inner membrane. Essential cell division protein. The polypeptide is Cell division protein FtsQ (Rickettsia felis (strain ATCC VR-1525 / URRWXCal2) (Rickettsia azadi)).